The sequence spans 344 residues: 5,10-methenyltetrahydromethanopterin hydrogenase (344 aa).

This sequence belongs to the HMD family. Homotetramer.

The enzyme catalyses 5,10-methenyl-5,6,7,8-tetrahydromethanopterin + H2 = 5,10-methylenetetrahydromethanopterin + H(+). Its pathway is one-carbon metabolism; methanogenesis from CO(2); 5,10-methylene-5,6,7,8-tetrahydromethanopterin from 5,10-methenyl-5,6,7,8-tetrahydromethanopterin (hydrogen route): step 1/1. Activity requires salt; 100 mM sodium or potassium salts of chloride, phosphate or sulfate are equally effective. Inactivated by O(2). In terms of biological role, catalyzes the reversible reduction of methenyl-H(4)MPT(+) to methylene-H(4)MPT. The polypeptide is 5,10-methenyltetrahydromethanopterin hydrogenase (Methanothermobacter marburgensis (strain ATCC BAA-927 / DSM 2133 / JCM 14651 / NBRC 100331 / OCM 82 / Marburg) (Methanobacterium thermoautotrophicum)).